Consider the following 44-residue polypeptide: Photosystem I reaction center subunit IX (44 aa).

Residues Tyr-7 to Ile-27 traverse the membrane as a helical segment.

It belongs to the PsaJ family.

Its subcellular location is the plastid. It is found in the chloroplast thylakoid membrane. May help in the organization of the PsaE and PsaF subunits. This Solanum bulbocastanum (Wild potato) protein is Photosystem I reaction center subunit IX.